A 255-amino-acid polypeptide reads, in one-letter code: Menaquinone reductase, iron-sulfur cluster-binding subunit (255 aa).

4Fe-4S ferredoxin-type domains are found at residues Trp-11–Asp-41, His-66–Glu-97, and Gly-99–Phe-128. [4Fe-4S] cluster is bound by residues Cys-20, Cys-23, Cys-26, Cys-30, Cys-75, Cys-78, Cys-83, Cys-87, Cys-108, Cys-111, Cys-114, and Cys-118. 4 residues coordinate [3Fe-4S] cluster: Cys-155, Cys-158, Cys-188, and Cys-192.

The Qrc complex is composed of four subunits: QrcA, QrcB, QrcC and QrcD. Can form a supercomplex with the [NiFe] hydrogenase HynA1 and the tetraheme Type I cytochrome c3 TpIc(3), its physiological electron donors. [4Fe-4S] cluster is required as a cofactor. [3Fe-4S] cluster serves as cofactor.

The protein resides in the periplasm. Its function is as follows. Component of the respiratory Qrc complex, that catalyzes the reduction of the menaquinone pool using electrons transferred from the reduced periplasmic cytochrome c3, and which is probably involved in sulfate respiration. Is likely essential for growth on H(2) or formate since the periplasmic hydrogenases and/or formate dehydrogenases act as primary electron donors for the Qrc complex. QrcC is an electron-transferring subunit; its cubane iron sulfur clusters form a pathway for electron transfer between the hemes of QrcA and the membrane quinone pool. The protein is Menaquinone reductase, iron-sulfur cluster-binding subunit of Nitratidesulfovibrio vulgaris (strain ATCC 29579 / DSM 644 / CCUG 34227 / NCIMB 8303 / VKM B-1760 / Hildenborough) (Desulfovibrio vulgaris).